A 568-amino-acid chain; its full sequence is Clathrin coat assembly protein AP180B (568 aa).

Residues Met-1 to His-127 form the ENTH domain. The span at His-262 to Pro-283 shows a compositional bias: basic and acidic residues. Residues His-262–Lys-302 form a disordered region. Lys-282 is covalently cross-linked (Glycyl lysine isopeptide (Lys-Gly) (interchain with G-Cter in ubiquitin)). Over residues Ser-284–Asn-298 the composition is skewed to low complexity. Thr-449 carries the post-translational modification Phosphothreonine.

Belongs to the AP180 family. As to quaternary structure, interacts with PAN1 and the clathrin heavy and light chains CHC1 and CLC1.

The protein resides in the bud. It is found in the bud neck. It localises to the cell membrane. Its subcellular location is the cytoplasm. Involved in endocytosis and clathrin cage assembly. The sequence is that of Clathrin coat assembly protein AP180B (YAP1802) from Saccharomyces cerevisiae (strain ATCC 204508 / S288c) (Baker's yeast).